We begin with the raw amino-acid sequence, 169 residues long: MHTSIYANRSTSFSPSAGNDTQNTFGRVSTGMISEVVYREDQPLMTQLLLLPLLQQLGQQSRWQLWLTPKQKLSREWVQSAGLPLAKVMQISQIAPCHTVDSMIRALRTGNYSVVIGWLSEELTEDEHFRLVEAAEEGNAIGLIMRPVNPDSLGRGHLSGLKIHSNLYH.

A disordered region spans residues Met-1–Gln-22. The segment at Ala-106–Tyr-112 is ftsZ binding. A lon protease binding region spans residues Lys-162–His-169.

The protein belongs to the SulA family. Interacts with FtsZ. Is rapidly cleaved and degraded by the Lon protease once DNA damage is repaired.

In terms of biological role, component of the SOS system and an inhibitor of cell division. Accumulation of SulA causes rapid cessation of cell division and the appearance of long, non-septate filaments. In the presence of GTP, binds a polymerization-competent form of FtsZ in a 1:1 ratio, thus inhibiting FtsZ polymerization and therefore preventing it from participating in the assembly of the Z ring. This mechanism prevents the premature segregation of damaged DNA to daughter cells during cell division. In Enterobacter sp. (strain 638), this protein is Cell division inhibitor SulA.